The primary structure comprises 560 residues: uncharacterized protein (560 aa).

One can recognise an ABC transmembrane type-1 domain in the interval 1–281 (MLWNWVALVG…LGSFFHVAMN (281 aa)). Transmembrane regions (helical) follow at residues 2-22 (LWNW…SYIL), 32-52 (LLSA…RAFA), 108-128 (IYFG…LTLF), 138-160 (TAII…NKIA), 168-188 (WSIY…LITL), 223-243 (VSLM…TALL), and 249-269 (QLSV…FIPL). Positions 314 to 547 (VEIKDLHFSY…QGAYAEMFQQ (234 aa)) constitute an ABC transporter domain. 347–354 (GKSGCGKS) provides a ligand contact to ATP.

This sequence belongs to the ABC transporter superfamily.

It is found in the cell inner membrane. This is an uncharacterized protein from Haemophilus influenzae (strain ATCC 51907 / DSM 11121 / KW20 / Rd).